Consider the following 599-residue polypeptide: Matrix metallopeptidase-21 (599 aa).

The first 20 residues, 1 to 20, serve as a signal peptide directing secretion; sequence MLTVIRRIFIIQTFIFITAE. Positions 21–170 are excised as a propeptide; sequence KIFHSRDHSD…NHEHQAPVRK (150 aa). Residue C130 coordinates Zn(2+). Positions 141-170 are disordered; the sequence is DVTGSNSTRNHIRTSTNTSHNHEHQAPVRK. Over residues 143–159 the composition is skewed to polar residues; that stretch reads TGSNSTRNHIRTSTNTS. H309 serves as a coordination point for Zn(2+). E310 is a catalytic residue. Zn(2+) contacts are provided by H313 and H319. An intrachain disulfide couples C355 to C586. Hemopexin repeat units follow at residues 356–415, 417–473, 474–522, and 529–585; these read TGRF…WHGL, SGGV…FPGV, SGPL…FPAI, and VRSL…WFDI. The N-linked (GlcNAc...) asparagine glycan is linked to N398.

This sequence belongs to the peptidase M10A family. Post-translationally, the precursor is cleaved by a furin endopeptidase.

Its function is as follows. Plays a specialized role in the generation of left-right asymmetry during embryogenesis. May act as a negative regulator of the NOTCH-signaling pathway. The sequence is that of Matrix metallopeptidase-21 from Danio rerio (Zebrafish).